The sequence spans 517 residues: Maturase K (517 aa).

It belongs to the intron maturase 2 family. MatK subfamily.

The protein localises to the plastid. It is found in the chloroplast. Usually encoded in the trnK tRNA gene intron. Probably assists in splicing its own and other chloroplast group II introns. The chain is Maturase K from Phalaenopsis japonica (Orchid).